A 500-amino-acid polypeptide reads, in one-letter code: Galactofuranose transporter ATP-binding protein YtfR (500 aa).

2 ABC transporter domains span residues 10–245 (LRTE…LGRE) and 259–497 (LSDK…IMNA). 42 to 49 (GENGAGKS) lines the ATP pocket.

The protein belongs to the ABC transporter superfamily. The complex is composed of two ATP-binding proteins (YtfR), two transmembrane proteins (YtfT and YjfF) and a solute-binding protein (YtfQ).

The protein localises to the cell inner membrane. The enzyme catalyses D-galactofuranose(out) + ATP + H2O = D-galactofuranose(in) + ADP + phosphate + H(+). In terms of biological role, part of the ABC transporter complex YtfQRT-YjfF involved in galactofuranose transport. Responsible for energy coupling to the transport system. The polypeptide is Galactofuranose transporter ATP-binding protein YtfR (ytfR) (Escherichia coli O157:H7).